Consider the following 390-residue polypeptide: Formate-dependent phosphoribosylglycinamide formyltransferase (390 aa).

N(1)-(5-phospho-beta-D-ribosyl)glycinamide is bound by residues 14–15 (EL) and Glu-74. Residues Arg-106, Lys-147, 152–157 (SSGKGQ), 187–190 (EQFI), and Glu-195 each bind ATP. Residues 111-304 (DLAAQELGIT…EFDLHARAIM (194 aa)) enclose the ATP-grasp domain. Positions 263 and 275 each coordinate Mg(2+). N(1)-(5-phospho-beta-D-ribosyl)glycinamide is bound by residues Asp-282, Lys-351, and 358–359 (RR).

Belongs to the PurK/PurT family. As to quaternary structure, homodimer.

It carries out the reaction N(1)-(5-phospho-beta-D-ribosyl)glycinamide + formate + ATP = N(2)-formyl-N(1)-(5-phospho-beta-D-ribosyl)glycinamide + ADP + phosphate + H(+). The protein operates within purine metabolism; IMP biosynthesis via de novo pathway; N(2)-formyl-N(1)-(5-phospho-D-ribosyl)glycinamide from N(1)-(5-phospho-D-ribosyl)glycinamide (formate route): step 1/1. Involved in the de novo purine biosynthesis. Catalyzes the transfer of formate to 5-phospho-ribosyl-glycinamide (GAR), producing 5-phospho-ribosyl-N-formylglycinamide (FGAR). Formate is provided by PurU via hydrolysis of 10-formyl-tetrahydrofolate. This is Formate-dependent phosphoribosylglycinamide formyltransferase from Erythrobacter litoralis (strain HTCC2594).